A 364-amino-acid chain; its full sequence is Envelope glycoprotein US27 (364 aa).

Over 1–36 (MTTSTTTTTNIMLQVSNVTNHTLNSTEIYQLFEYTR) the chain is Virion surface. 3 N-linked (GlcNAc...) asparagine; by host glycosylation sites follow: Asn-17, Asn-20, and Asn-24. Residues 37–57 (FGVWLMCIVGTFLNMLVITTI) form a helical membrane-spanning segment. The Intravirion portion of the chain corresponds to 58 to 69 (LYYRRKKKSPSD). Residues 70–90 (TYICNLAVADLLIVVGLPFFL) traverse the membrane as a helical segment. The Virion surface segment spans residues 91-103 (EYAKHHPKLSREV). The helical transmembrane segment at 104 to 124 (VCSGLNACFYICLFAGVCFLI) threads the bilayer. The Intravirion segment spans residues 125–150 (NLSMDRYCVIVWGVELNRVRNNKRAT). Residues 151–171 (CWVVIFWILAALMGMPHYLMY) form a helical membrane-spanning segment. The Virion surface portion of the chain corresponds to 172–188 (SHTNNECVGEFANETSG). Residues 189–209 (WFPVFLNTKVNICGYLAPIVL) traverse the membrane as a helical segment. At 210–234 (MAYTYNRMVRFIINYVGKWHMQTLH) the chain is on the intravirion side. A helical transmembrane segment spans residues 235–255 (VLLVVVVSFASFWFPFNLALF). The Virion surface segment spans residues 256–279 (LESIRLLSGTQNETLQTVITFCLY). The helical transmembrane segment at 280–300 (VGQFLAYVRACLNPGIYILVG) threads the bilayer. Over 301–364 (TQMRKDMWTT…MESGEEEFLL (64 aa)) the chain is Intravirion. Positions 344-364 (KRTHYDRKHAPMESGEEEFLL) are disordered.

This sequence belongs to the G-protein coupled receptor 1 family. As to quaternary structure, heterodimerizes with US28.

It is found in the virion. The protein resides in the host cell membrane. Plays an important role in spread of HCMV via the extracellular route. As a G-protein-coupled receptor (vGPCR), may activate signaling pathways important for virion assembly or egress processes. The chain is Envelope glycoprotein US27 (US27) from Homo sapiens (Human).